Reading from the N-terminus, the 185-residue chain is Elongation factor P (185 aa).

Belongs to the elongation factor P family.

The protein localises to the cytoplasm. Its pathway is protein biosynthesis; polypeptide chain elongation. Involved in peptide bond synthesis. Stimulates efficient translation and peptide-bond synthesis on native or reconstituted 70S ribosomes in vitro. Probably functions indirectly by altering the affinity of the ribosome for aminoacyl-tRNA, thus increasing their reactivity as acceptors for peptidyl transferase. This chain is Elongation factor P, found in Microcystis aeruginosa (strain NIES-843 / IAM M-2473).